The sequence spans 100 residues: Acylphosphatase (100 aa).

The Acylphosphatase-like domain occupies 14 to 100; that stretch reads RWRFFVEGKV…TGADWFEIRS (87 aa). Residues Arg-29 and Asn-47 contribute to the active site.

This sequence belongs to the acylphosphatase family.

The catalysed reaction is an acyl phosphate + H2O = a carboxylate + phosphate + H(+). This Synechococcus sp. (strain WH7803) protein is Acylphosphatase (acyP).